We begin with the raw amino-acid sequence, 60 residues long: Large ribosomal subunit protein eL37 (60 aa).

The Zn(2+) site is built by Cys-19, Cys-22, Cys-34, and Cys-37. The C4-type zinc-finger motif lies at 19–37 (CRRCGSISYHARHKVCSAC).

It belongs to the eukaryotic ribosomal protein eL37 family. The cofactor is Zn(2+).

Binds to the 23S rRNA. This chain is Large ribosomal subunit protein eL37, found in Methanosphaerula palustris (strain ATCC BAA-1556 / DSM 19958 / E1-9c).